The following is a 129-amino-acid chain: M-zodatoxin-Lt8h (129 aa).

Residues 1 to 20 (MKYFVVALALVAAFACIAES) form the signal peptide. Residues 21–60 (KPAESEHELAEVEEENELADLEDAVWLEDLADLSDLEETR) constitute a propeptide that is removed on maturation.

This sequence belongs to the cationic peptide 06 (cytoinsectotoxin) family. Expressed by the venom gland.

It is found in the secreted. Its function is as follows. Insecticidal, cytolytic and antimicrobial peptide. Has insecticidal activity against the flesh fly S.carnaria. Has antibacterial activity against the Gram-negative bacteria E.coli. Forms voltage-dependent, ion-permeable channels in membranes. At high concentration causes cell membrane lysis. The polypeptide is M-zodatoxin-Lt8h (cit 1-11) (Lachesana tarabaevi (Spider)).